A 161-amino-acid polypeptide reads, in one-letter code: C-type natriuretic peptide (161 aa).

The signal sequence occupies residues 1–22 (MFASRLAALGLLLLALVLDGKP). Positions 19–135 (DGKPAPPPQP…GGGGSRRLKG (117 aa)) are disordered. Residues 23-139 (APPPQPLRKA…SRRLKGLPKK (117 aa)) constitute a propeptide that is removed on maturation. Low complexity-rich tracts occupy residues 29–60 (LRKAPAGGTTALQRQLTEQQQQQQQAEGSSGP) and 76–93 (AAPTAPKSKGAAASAASR). Basic and acidic residues predominate over residues 94–104 (LLRDLRPDGKQ). Gly residues predominate over residues 120–130 (GGGGGGGGGGS). Cys145 and Cys161 are joined by a disulfide.

It belongs to the natriuretic peptide family. In terms of tissue distribution, expressed by the venom gland.

Its subcellular location is the secreted. Snake venom natriuretic peptide that has a vasorelaxant activity in rat aortic strips and a diuretic potency in anesthetized rats. May act by activating natriuretic receptors (NPR1 and/or NPR2). This is C-type natriuretic peptide from Rhabdophis tigrinus tigrinus (Tiger keelback snake).